The following is a 323-amino-acid chain: tRNA U34 carboxymethyltransferase (323 aa).

Carboxy-S-adenosyl-L-methionine contacts are provided by residues lysine 91, tryptophan 105, lysine 110, glycine 130, 152–154, 181–182, methionine 196, tyrosine 200, and arginine 315; these read DPT and IE.

Belongs to the class I-like SAM-binding methyltransferase superfamily. CmoB family. Homotetramer.

The enzyme catalyses carboxy-S-adenosyl-L-methionine + 5-hydroxyuridine(34) in tRNA = 5-carboxymethoxyuridine(34) in tRNA + S-adenosyl-L-homocysteine + H(+). Catalyzes carboxymethyl transfer from carboxy-S-adenosyl-L-methionine (Cx-SAM) to 5-hydroxyuridine (ho5U) to form 5-carboxymethoxyuridine (cmo5U) at position 34 in tRNAs. The chain is tRNA U34 carboxymethyltransferase from Salmonella enteritidis PT4 (strain P125109).